We begin with the raw amino-acid sequence, 180 residues long: Interleukin-1-binding protein (180 aa).

The first 20 residues, 1–20 (MSILPVIFLPIFFYSPFVQT), serve as a signal peptide directing secretion. N80, N103, and N113 each carry an N-linked (GlcNAc...) asparagine; by host glycan.

The protein belongs to the interleukin-1 receptor family. In terms of assembly, interacts with mouse Il1b.

The protein resides in the secreted. Its function is as follows. May reduce the host inflammatory response by interacting with inteleukin-1 beta (Il1b) and thus decreasing the association between IL1B and its cellular receptor. This is Interleukin-1-binding protein (OPG201) from Monkeypox virus.